The primary structure comprises 259 residues: Ribosomal RNA small subunit methyltransferase A (259 aa).

The S-adenosyl-L-methionine site is built by Asn13, Leu15, Gly40, Glu61, Asp85, and Asn103.

It belongs to the class I-like SAM-binding methyltransferase superfamily. rRNA adenine N(6)-methyltransferase family. RsmA subfamily.

It is found in the cytoplasm. It catalyses the reaction adenosine(1518)/adenosine(1519) in 16S rRNA + 4 S-adenosyl-L-methionine = N(6)-dimethyladenosine(1518)/N(6)-dimethyladenosine(1519) in 16S rRNA + 4 S-adenosyl-L-homocysteine + 4 H(+). Functionally, specifically dimethylates two adjacent adenosines (A1518 and A1519) in the loop of a conserved hairpin near the 3'-end of 16S rRNA in the 30S particle. May play a critical role in biogenesis of 30S subunits. The chain is Ribosomal RNA small subunit methyltransferase A from Neisseria gonorrhoeae (strain NCCP11945).